Reading from the N-terminus, the 198-residue chain is Nucleoid occlusion factor SlmA (198 aa).

The HTH tetR-type domain maps to 10–70 (NRREEILQSL…SLIEFIEDSL (61 aa)). Positions 33–52 (TTAKLAASVGVSEAALYRHF) form a DNA-binding region, H-T-H motif. The stretch at 117 to 145 (EQDKLQGRINQLFERIEAQLRQVLREKKM) forms a coiled coil.

The protein belongs to the nucleoid occlusion factor SlmA family. In terms of assembly, homodimer. Interacts with FtsZ.

It localises to the cytoplasm. It is found in the nucleoid. In terms of biological role, required for nucleoid occlusion (NO) phenomenon, which prevents Z-ring formation and cell division over the nucleoid. Acts as a DNA-associated cell division inhibitor that binds simultaneously chromosomal DNA and FtsZ, and disrupts the assembly of FtsZ polymers. SlmA-DNA-binding sequences (SBS) are dispersed on non-Ter regions of the chromosome, preventing FtsZ polymerization at these regions. In Enterobacter sp. (strain 638), this protein is Nucleoid occlusion factor SlmA.